The following is a 398-amino-acid chain: Keratinocyte differentiation factor 1 (398 aa).

2 disordered regions span residues 1–60 and 123–156; these read MPRP…SITF and AEAN…STMG. Basic and acidic residues predominate over residues 44 to 55; that stretch reads RPDPKDPGHHGP. Ser-218 carries the post-translational modification Phosphoserine. Disordered regions lie at residues 307–340 and 369–392; these read RKSR…TMVG and GAPG…SGAP. A compositionally biased stretch (polar residues) spans 377–389; it reads HDSSFQGTDTDSS.

It is found in the cytoplasm. The protein localises to the cell junction. Plays a role in the regulation of the epidermis formation during early development. Required both as an inhibitor of basal cell proliferation and a promoter of differentiation of basal progenitor cell progeny. This chain is Keratinocyte differentiation factor 1 (KDF1), found in Homo sapiens (Human).